The following is a 290-amino-acid chain: N-acetylneuraminate lyase (290 aa).

Residues Ser44 and Thr45 each coordinate aceneuramate. Catalysis depends on Tyr133, which acts as the Proton donor. The Schiff-base intermediate with substrate role is filled by Lys161. Thr163, Gly185, Asp187, Glu188, and Ser204 together coordinate aceneuramate.

It belongs to the DapA family. NanA subfamily. As to quaternary structure, homotetramer.

The protein localises to the cytoplasm. It catalyses the reaction aceneuramate = aldehydo-N-acetyl-D-mannosamine + pyruvate. It participates in amino-sugar metabolism; N-acetylneuraminate degradation; D-fructose 6-phosphate from N-acetylneuraminate: step 1/5. Its function is as follows. Catalyzes the reversible aldol cleavage of N-acetylneuraminic acid (sialic acid; Neu5Ac) to form pyruvate and N-acetylmannosamine (ManNAc) via a Schiff base intermediate. The sequence is that of N-acetylneuraminate lyase from Fusobacterium nucleatum subsp. nucleatum (strain ATCC 25586 / DSM 15643 / BCRC 10681 / CIP 101130 / JCM 8532 / KCTC 2640 / LMG 13131 / VPI 4355).